We begin with the raw amino-acid sequence, 144 residues long: Protein archease (144 aa).

Residues D14, D143, and I144 each coordinate Ca(2+).

This sequence belongs to the archease family.

Activates the tRNA-splicing ligase complex by facilitating the enzymatic turnover of catalytic subunit RtcB. Acts by promoting the guanylylation of RtcB, a key intermediate step in tRNA ligation. Can also alter the NTP specificity of RtcB such that ATP, dGTP or ITP is used efficiently. The protein is Protein archease of Aeropyrum pernix (strain ATCC 700893 / DSM 11879 / JCM 9820 / NBRC 100138 / K1).